The following is a 664-amino-acid chain: Delta-like protein C (664 aa).

A signal peptide spans 1–20 (MARVLLTCFFILISSHLGKS). Over 21-511 (SGVFELKVLS…VNSPALPAAL (491 aa)) the chain is Extracellular. The DSL domain occupies 154–198 (VVCDEFYHGEECSDFCRPRNDTFGHFNCDAAGNRICLPGWKGDYC). 27 cysteine pairs are disulfide-bonded: C156–C165, C169–C181, C189–C198, C203–C214, C207–C220, C222–C231, C234–C245, C240–C251, C253–C262, C269–C281, C275–C291, C293–C302, C309–C320, C314–C329, C331–C340, C347–C358, C352–C368, C370–C379, C386–C397, C391–C406, C408–C417, C424–C435, C429–C444, C446–C455, C462–C473, C467–C482, and C484–C493. N-linked (GlcNAc...) asparagine glycosylation occurs at N173. 3 EGF-like domains span residues 199-232 (TEPI…PLCD), 233-263 (ECTR…LFCN), and 265-303 (DLNF…KNCE). The 37-residue stretch at 305–341 (ETNECDSNPCKNGGSCNDQENDYTCTCPQGFYGKNCE) folds into the EGF-like 4; calcium-binding domain. EGF-like domains lie at 343–380 (SAMT…SNCE) and 382–418 (KIDR…SRCE). The 37-residue stretch at 420–456 (NIDDCSSNPCQNAGTCVDGINGYTCTCTLGFSGKDCR) folds into the EGF-like 7; calcium-binding domain. Positions 458–494 (RSDACSFMPCQNGGTCYTHFSGPVCQCPAGFMGTQCE) constitute an EGF-like 8 domain. The chain crosses the membrane as a helical span at residues 512 to 532 (IVSFTLGLITLTLVICAAIVV). Residues 533–664 (LRQMRQNHKA…IEQRVFATEV (132 aa)) lie on the Cytoplasmic side of the membrane.

In terms of processing, ubiquitinated by mib, leading to its endocytosis and subsequent degradation. As to expression, strongly expressed in the early retina, where it precedes other delta proteins. Also expressed in cranial ganglia, in sensory epithelia including ear and lateral line and in scattered epidermal cells. In the mesoderm, expression is visible by 50% epiboly; it is expressed subsequently in the tail bud, in stripes in the presomitic mesoderm and in the posterior half of each somite. Also expressed in notochord, blood vessels and pronephros. In contrast to other delta proteins, it is not expressed in the majority of nascent primary neurons. In somites, it marks the posterior part of each formed somite, while deltaD (dld) marks the anterior part.

The protein localises to the membrane. Acts as a ligand for Notch receptors and is involved in somitogenesis. Can activate Notch receptors. Required in somite segmentation to keep the oscillations of neighboring presomitic mesoderm cells synchronized. This chain is Delta-like protein C (dlc), found in Danio rerio (Zebrafish).